Consider the following 277-residue polypeptide: Small ribosomal subunit protein uS2 (277 aa).

Residues 226 to 277 form a disordered region; the sequence is GQQARADRGEDLGAAVEPVAEPALVEEAAAPVTEDEQVPAEAAAETERQSDA. Residues 239 to 257 show a composition bias toward low complexity; the sequence is AAVEPVAEPALVEEAAAPV.

The protein belongs to the universal ribosomal protein uS2 family.

The chain is Small ribosomal subunit protein uS2 from Sphingopyxis alaskensis (strain DSM 13593 / LMG 18877 / RB2256) (Sphingomonas alaskensis).